The chain runs to 236 residues: Ribose-5-phosphate isomerase A (236 aa).

Substrate-binding positions include 29 to 32 (SGST), 86 to 89 (DGAD), and 99 to 102 (KGGG). Catalysis depends on Glu108, which acts as the Proton acceptor. Substrate is bound at residue Lys126.

This sequence belongs to the ribose 5-phosphate isomerase family. In terms of assembly, homodimer.

It carries out the reaction aldehydo-D-ribose 5-phosphate = D-ribulose 5-phosphate. It functions in the pathway carbohydrate degradation; pentose phosphate pathway; D-ribose 5-phosphate from D-ribulose 5-phosphate (non-oxidative stage): step 1/1. Functionally, catalyzes the reversible conversion of ribose-5-phosphate to ribulose 5-phosphate. This is Ribose-5-phosphate isomerase A from Prochlorococcus marinus (strain NATL2A).